Reading from the N-terminus, the 496-residue chain is Ankyrin repeat domain-containing protein 34A (496 aa).

ANK repeat units follow at residues T4 to E33, Q37 to I72, L76 to V106, and A110 to T139. Q15 is subject to N5-methylglutamine. 2 stretches are compositionally biased toward polar residues: residues D147–S162 and F180–T191. The disordered stretch occupies residues D147–S473. Residues A204–F214 show a composition bias toward basic and acidic residues. Positions L218–K233 are enriched in pro residues. A compositionally biased stretch (basic residues) spans P234 to K243. Phosphothreonine is present on T316. Residues R463–S473 show a composition bias toward basic residues.

Belongs to the ANKRD34 family. Methylated at Gln-15 by N6AMT1.

This is Ankyrin repeat domain-containing protein 34A (ANKRD34A) from Homo sapiens (Human).